The chain runs to 449 residues: Elongation factor 1-alpha (449 aa).

Residues 5–230 form the tr-type G domain; that stretch reads KVHINIVVIG…DQIQEPKRPS (226 aa). Residues 14 to 21 are G1; the sequence is GHVDSGKS. GTP is bound at residue 14–21; the sequence is GHVDSGKS. Lys55 bears the N6,N6-dimethyllysine mark. Positions 70 to 74 are G2; the sequence is GITID. Residue Lys79 is modified to N6,N6,N6-trimethyllysine. Residues 91 to 94 are G3; that stretch reads DAPG. GTP is bound by residues 91–95 and 153–156; these read DAPGH and NKMD. Residues 153–156 are G4; that stretch reads NKMD. Lys187 is modified (N6,N6,N6-trimethyllysine). The G5 stretch occupies residues 194 to 196; sequence SGF. Lys261 carries the post-translational modification N6-methyllysine. The residue at position 289 (Glu289) is a 5-glutamyl glycerylphosphorylethanolamine. Lys306 carries the post-translational modification N6,N6,N6-trimethyllysine. The residue at position 362 (Glu362) is a 5-glutamyl glycerylphosphorylethanolamine. An N6,N6,N6-trimethyllysine modification is found at Lys396.

Belongs to the TRAFAC class translation factor GTPase superfamily. Classic translation factor GTPase family. EF-Tu/EF-1A subfamily.

It localises to the cytoplasm. In terms of biological role, this protein promotes the GTP-dependent binding of aminoacyl-tRNA to the A-site of ribosomes during protein biosynthesis. The sequence is that of Elongation factor 1-alpha (EF1) from Manihot esculenta (Cassava).